We begin with the raw amino-acid sequence, 130 residues long: Cytochrome c-type biogenesis protein CcmE (130 aa).

Residues 1–7 (MKKKHKR) are Cytoplasmic-facing. The chain crosses the membrane as a helical; Signal-anchor for type II membrane protein span at residues 8–28 (LLITSGIFCFLSCAVFFILTT). The Extracellular portion of the chain corresponds to 29–130 (LKENISFFYT…DENYMPKVLK (102 aa)). His120 and Tyr124 together coordinate heme.

It belongs to the CcmE/CycJ family.

Its subcellular location is the cell membrane. Its function is as follows. Heme chaperone required for the biogenesis of c-type cytochromes. Transiently binds heme delivered by CcmC and transfers the heme to apo-cytochromes in a process facilitated by CcmF and CcmH. The sequence is that of Cytochrome c-type biogenesis protein CcmE from Wolbachia pipientis wMel.